The following is a 303-amino-acid chain: Ribosomal protein uL3 glutamine methyltransferase (303 aa).

Belongs to the protein N5-glutamine methyltransferase family. PrmB subfamily.

It carries out the reaction L-glutaminyl-[ribosomal protein uL3] + S-adenosyl-L-methionine = N(5)-methyl-L-glutaminyl-[ribosomal protein uL3] + S-adenosyl-L-homocysteine + H(+). Its function is as follows. Methylates large ribosomal subunit protein uL3 on a specific glutamine residue. This Neisseria meningitidis serogroup B (strain ATCC BAA-335 / MC58) protein is Ribosomal protein uL3 glutamine methyltransferase.